Here is a 143-residue protein sequence, read N- to C-terminus: Transcriptional regulator SlyA (143 aa).

The HTH marR-type domain maps to 2–135 (ESTLGSDLAR…LSGLIDKLER (134 aa)). Residues 49 to 72 (QIQLAKAIGIEQPSLVRTLDQLEE) constitute a DNA-binding region (H-T-H motif).

Belongs to the SlyA family. In terms of assembly, homodimer.

In terms of biological role, transcription regulator that can specifically activate or repress expression of target genes. The protein is Transcriptional regulator SlyA of Yersinia enterocolitica serotype O:8 / biotype 1B (strain NCTC 13174 / 8081).